The following is a 308-amino-acid chain: Probable manganese-dependent inorganic pyrophosphatase (308 aa).

H9, D13, D15, D75, H97, and D149 together coordinate Mn(2+).

This sequence belongs to the PPase class C family. The cofactor is Mn(2+).

The protein localises to the cytoplasm. It carries out the reaction diphosphate + H2O = 2 phosphate + H(+). This is Probable manganese-dependent inorganic pyrophosphatase from Enterococcus faecalis (strain ATCC 700802 / V583).